Consider the following 363-residue polypeptide: Anhydro-N-acetylmuramic acid kinase (363 aa).

9–16 is an ATP binding site; it reads GTSLDGID.

Belongs to the anhydro-N-acetylmuramic acid kinase family.

It catalyses the reaction 1,6-anhydro-N-acetyl-beta-muramate + ATP + H2O = N-acetyl-D-muramate 6-phosphate + ADP + H(+). It participates in amino-sugar metabolism; 1,6-anhydro-N-acetylmuramate degradation. It functions in the pathway cell wall biogenesis; peptidoglycan recycling. In terms of biological role, catalyzes the specific phosphorylation of 1,6-anhydro-N-acetylmuramic acid (anhMurNAc) with the simultaneous cleavage of the 1,6-anhydro ring, generating MurNAc-6-P. Is required for the utilization of anhMurNAc either imported from the medium or derived from its own cell wall murein, and thus plays a role in cell wall recycling. In Nitrosomonas europaea (strain ATCC 19718 / CIP 103999 / KCTC 2705 / NBRC 14298), this protein is Anhydro-N-acetylmuramic acid kinase.